The primary structure comprises 136 residues: Large ribosomal subunit protein uL16 (136 aa).

Belongs to the universal ribosomal protein uL16 family. As to quaternary structure, part of the 50S ribosomal subunit.

Its function is as follows. Binds 23S rRNA and is also seen to make contacts with the A and possibly P site tRNAs. This is Large ribosomal subunit protein uL16 from Shewanella baltica (strain OS155 / ATCC BAA-1091).